We begin with the raw amino-acid sequence, 188 residues long: Ion-translocating oxidoreductase complex subunit G (188 aa).

The Cytoplasmic portion of the chain corresponds to Met1 to Lys9. The helical transmembrane segment at Val10–Thr30 threads the bilayer. The Extracellular segment spans residues Pro31 to Gly188. At Thr166 the chain carries FMN phosphoryl threonine.

The protein belongs to the RnfG family. The Rnf complex is probably composed of eight subunits, including RnfA, RnfB, RnfC, RnfD, RnfE and RnfG. Requires FMN as cofactor.

The protein resides in the cell membrane. Part of a membrane-bound complex that couples electron transfer with translocation of ions across the membrane. Catalyzes Na(+) transport, most probably coupled to electron transfer from reduced ferredoxin to methanophenazine and heterodisulfide reductase. Involved in heterodisulfide reduction during methanogenesis from acetate. This is Ion-translocating oxidoreductase complex subunit G from Methanosarcina acetivorans (strain ATCC 35395 / DSM 2834 / JCM 12185 / C2A).